A 672-amino-acid polypeptide reads, in one-letter code: uncharacterized protein (672 aa).

The first 24 residues, 1–24 (MKTLKVLKIFIIVYISSVSLESFA), serve as a signal peptide directing secretion. 2 consecutive transmembrane segments (helical) span residues 226–246 (IIGA…ALNK) and 254–274 (ITLF…LGPL). Residues 363–372 (SNGTSGNNKP) are compositionally biased toward polar residues. The interval 363–384 (SNGTSGNNKPIPNFDPDGKKDR) is disordered. The next 4 helical transmembrane spans lie at 410–430 (IILV…LYFI), 436–456 (CMVT…MVLF), 469–489 (VCIS…LLIT), and 562–582 (VVSI…FYYF). The segment covering 628 to 646 (HGKSSLGDKPDIGNKRKDG) has biased composition (basic and acidic residues). Residues 628–672 (HGKSSLGDKPDIGNKRKDGAQQGEDAVNSSGGEVADLASGSGGGK) are disordered.

The protein belongs to the TrbL/VirB6 family.

It localises to the cell membrane. This is an uncharacterized protein from Rickettsia prowazekii (strain Madrid E).